The following is a 399-amino-acid chain: 3-sulfinopropanoyl-CoA desulfinase (399 aa).

Residues 121-124 (ICIS), S130, and 153-156 (YWIT) contribute to the FAD site. A substrate-binding site is contributed by 244–245 (YN). FAD contacts are provided by residues R273, Q340, S344, 367-371 (GGTAQ), and Q388.

It belongs to the acyl-CoA dehydrogenase family. In terms of assembly, homotrimer or homotetramer. The cofactor is FAD.

It carries out the reaction 3-sulfinopropanoyl-CoA + H2O = propanoyl-CoA + sulfite + H(+). Its function is as follows. Catalyzes the conversion 3-sulfinopropanoyl-CoA (3SP-CoA) to propanoyl-CoA by abstraction of sulfite. Does not show dehydrogenase activity. This is 3-sulfinopropanoyl-CoA desulfinase from Variovorax paradoxus.